Here is a 420-residue protein sequence, read N- to C-terminus: MDVENGEGQVQVHLKTKQEHYAVPDVPYAIDGTVTTVELNTFVNALLRQKDGSSDTDFDFLVFDEYLRGRLCDHLREKAISFEDAIEIEYVERFPAPEPQDCLLHDDWVSAVKASGKWILSGCYDNTLNLWTNKGKHILTISGHTAPIKAVDWISLDEETGRFVSTSQDQTAMLWQWNVGSNSVECVSVCKGHERGVDSVSVSPDGLRFATGSWDTMLKVWSAEQEDAAEGSSKRMKESGVRTPKITLQGHRESVSAVQWMDASTLLTGSWDHTLKVWDLSLEGIKTEISTNKSIFDASYSKLNRLILTASADKNLRLYDPRTNQGSVVRNTYLGHNAWVQTVMWSTTEEFLFVSGAYDNQNKLWDCRSPKAPLYDLLGHGEKVLDIDWSNPKYIVSGGVDNTVRVFKSRKALAEDTEAK.

Residues 10-92 (VQVHLKTKQE…EDAIEIEYVE (83 aa)) form a ubiquitin-like (UBL) domain region. WD repeat units follow at residues 104 to 142 (LHDD…LTIS), 143 to 185 (GHTA…NSVE), 192 to 231 (GHER…AAEG), 250 to 288 (GHRE…IKTE), 290 to 329 (STNK…GSVV), 335 to 375 (GHNA…APLY), and 379 to 417 (GHGE…AEDT).

This sequence belongs to the WD repeat WDR12/YTM1 family.

The protein resides in the nucleus. The protein localises to the nucleolus. Its subcellular location is the nucleoplasm. Required for maturation of ribosomal RNAs and formation of the large ribosomal subunit. The sequence is that of Ribosome biogenesis protein WDR12 homolog from Drosophila erecta (Fruit fly).